A 753-amino-acid chain; its full sequence is Rsm22-cox11 tandem protein 1, mitochondrial (753 aa).

The N-terminal 39 residues, 1-39 (MPILTCRYKILFLYNLRNCFTFQNQRCLIPYGTTTTIRW), are a transit peptide targeting the mitochondrion. Residues C323, C329, C342, and C430 each coordinate [4Fe-4S] cluster. Residues 571–591 (IYYLVAISIFALGLTYAAVPL) form a helical membrane-spanning segment. Residues 592 to 753 (YRLFCSKTGY…TNGNLLTKLN (162 aa)) lie on the Mitochondrial intermembrane side of the membrane.

It in the N-terminal section; belongs to the methyltransferase superfamily. Rsm22 family. The protein in the C-terminal section; belongs to the COX11/CtaG family. As to quaternary structure, associates with the mitochondrial ribosome (mitoribosome). Only transiently interacts with the mitoribosome. Specific enzymatic cleavages in vivo by mitochondrial processing peptidase (MPP) yield mature proteins including rsm22-1 and cox11-1.

The protein resides in the mitochondrion. The protein localises to the mitochondrion inner membrane. Mitochondrial ribosome (mitoribosome) assembly factor. Binds at the interface of the head and body domains of the mitochondrial small ribosomal subunit (mt-SSU), occluding the mRNA channel and preventing compaction of the head domain towards the body. Probable inactive methyltransferase: retains the characteristic folding and ability to bind S-adenosyl-L-methionine, but it probably lost its methyltransferase activity. Functionally, exerts its effect at some terminal stage of cytochrome c oxidase synthesis, probably by being involved in the insertion of the copper B into subunit I. This is Rsm22-cox11 tandem protein 1, mitochondrial (cox1101) from Schizosaccharomyces pombe (strain 972 / ATCC 24843) (Fission yeast).